Here is a 34-residue protein sequence, read N- to C-terminus: Potassium channel toxin (34 aa).

3 disulfide bridges follow: Cys6–Cys25, Cys11–Cys29, and Cys15–Cys31.

Belongs to the short scorpion toxin superfamily. Potassium channel inhibitor family. Alpha-KTx 21 subfamily. Expressed by the venom gland.

It is found in the secreted. Functionally, toxin that blocks voltage-gated potassium channels (Kv). This is Potassium channel toxin from Tityus metuendus (Scorpion).